Here is a 139-residue protein sequence, read N- to C-terminus: Exodeoxyribonuclease 7 small subunit (139 aa).

Disordered stretches follow at residues methionine 1–phenylalanine 26 and aspartate 82–glutamate 139. The segment covering alanine 130–glutamate 139 has biased composition (acidic residues).

The protein belongs to the XseB family. As to quaternary structure, heterooligomer composed of large and small subunits.

It localises to the cytoplasm. The catalysed reaction is Exonucleolytic cleavage in either 5'- to 3'- or 3'- to 5'-direction to yield nucleoside 5'-phosphates.. In terms of biological role, bidirectionally degrades single-stranded DNA into large acid-insoluble oligonucleotides, which are then degraded further into small acid-soluble oligonucleotides. The protein is Exodeoxyribonuclease 7 small subunit of Rhodopirellula baltica (strain DSM 10527 / NCIMB 13988 / SH1).